Here is a 734-residue protein sequence, read N- to C-terminus: Photosystem I P700 chlorophyll a apoprotein A2 (734 aa).

Helical transmembrane passes span 46 to 69 (IFASHFGQLAIIFLWTSGNLFHVA), 135 to 158 (LYTGALFLLFLSAISLIAGWLHLQ), 175 to 199 (LNHHLSGLFGVSSLAWTGHLVHVAI), 273 to 291 (IAHHHLAIAFVFLVAGHMY), 330 to 353 (IHFQLGLALASLGVITSLVAQHMY), 369 to 395 (AALYTHHQYIAGFIMTGAFAHGAIFFI), 417 to 439 (AIKSHLSWASLFLGFHTLGLYVH), and 517 to 535 (FLVHHAIALGLHTTTLILV). Residues Cys559 and Cys568 each coordinate [4Fe-4S] cluster. The next 2 helical transmembrane spans lie at 575-596 (AFYLAVFWMLNTIGWVTFYWHW) and 643-665 (LSVWAWMFLFGHLVWATGFMFLI). His654, Met662, and Tyr670 together coordinate chlorophyll a. Position 671 (Trp671) interacts with phylloquinone. The helical transmembrane segment at 707–727 (LVGLAHFSVGYIFTYAAFLIA) threads the bilayer.

The protein belongs to the PsaA/PsaB family. The PsaA/B heterodimer binds the P700 chlorophyll special pair and subsequent electron acceptors. PSI consists of a core antenna complex that captures photons, and an electron transfer chain that converts photonic excitation into a charge separation. The eukaryotic PSI reaction center is composed of at least 11 subunits. It depends on P700 is a chlorophyll a/chlorophyll a' dimer, A0 is one or more chlorophyll a, A1 is one or both phylloquinones and FX is a shared 4Fe-4S iron-sulfur center. as a cofactor.

It localises to the plastid. Its subcellular location is the chloroplast thylakoid membrane. The enzyme catalyses reduced [plastocyanin] + hnu + oxidized [2Fe-2S]-[ferredoxin] = oxidized [plastocyanin] + reduced [2Fe-2S]-[ferredoxin]. Its function is as follows. PsaA and PsaB bind P700, the primary electron donor of photosystem I (PSI), as well as the electron acceptors A0, A1 and FX. PSI is a plastocyanin-ferredoxin oxidoreductase, converting photonic excitation into a charge separation, which transfers an electron from the donor P700 chlorophyll pair to the spectroscopically characterized acceptors A0, A1, FX, FA and FB in turn. Oxidized P700 is reduced on the lumenal side of the thylakoid membrane by plastocyanin. This is Photosystem I P700 chlorophyll a apoprotein A2 from Amborella trichopoda.